A 74-amino-acid chain; its full sequence is Exodeoxyribonuclease 7 small subunit (74 aa).

Belongs to the XseB family. As to quaternary structure, heterooligomer composed of large and small subunits.

Its subcellular location is the cytoplasm. It carries out the reaction Exonucleolytic cleavage in either 5'- to 3'- or 3'- to 5'-direction to yield nucleoside 5'-phosphates.. Functionally, bidirectionally degrades single-stranded DNA into large acid-insoluble oligonucleotides, which are then degraded further into small acid-soluble oligonucleotides. This is Exodeoxyribonuclease 7 small subunit from Leuconostoc citreum (strain KM20).